Consider the following 449-residue polypeptide: Maltoporin (449 aa).

A signal peptide spans Met-1–Ala-24.

This sequence belongs to the porin LamB (TC 1.B.3) family. In terms of assembly, homotrimer formed of three 18-stranded antiparallel beta-barrels, containing three independent channels.

It is found in the cell outer membrane. The enzyme catalyses beta-maltose(in) = beta-maltose(out). Functionally, involved in the transport of maltose and maltodextrins. The sequence is that of Maltoporin from Citrobacter koseri (strain ATCC BAA-895 / CDC 4225-83 / SGSC4696).